Consider the following 360-residue polypeptide: UDP-3-O-acylglucosamine N-acyltransferase (360 aa).

Residue His256 is the Proton acceptor of the active site. Positions 341–360 are disordered; sequence EGSGAETAARPDDDRDEGRG. Basic and acidic residues predominate over residues 349-360; that stretch reads ARPDDDRDEGRG.

This sequence belongs to the transferase hexapeptide repeat family. LpxD subfamily. In terms of assembly, homotrimer.

The enzyme catalyses a UDP-3-O-[(3R)-3-hydroxyacyl]-alpha-D-glucosamine + a (3R)-hydroxyacyl-[ACP] = a UDP-2-N,3-O-bis[(3R)-3-hydroxyacyl]-alpha-D-glucosamine + holo-[ACP] + H(+). It participates in bacterial outer membrane biogenesis; LPS lipid A biosynthesis. Catalyzes the N-acylation of UDP-3-O-acylglucosamine using 3-hydroxyacyl-ACP as the acyl donor. Is involved in the biosynthesis of lipid A, a phosphorylated glycolipid that anchors the lipopolysaccharide to the outer membrane of the cell. The sequence is that of UDP-3-O-acylglucosamine N-acyltransferase from Rhodopseudomonas palustris (strain TIE-1).